The chain runs to 328 residues: tRNA N6-adenosine threonylcarbamoyltransferase (328 aa).

Residues H111 and H115 each contribute to the Fe cation site. Substrate is bound by residues 133–137, D166, G179, D183, and N270; that span reads LVSGG. Position 296 (D296) interacts with Fe cation.

Belongs to the KAE1 / TsaD family. Fe(2+) is required as a cofactor.

Its subcellular location is the cytoplasm. The catalysed reaction is L-threonylcarbamoyladenylate + adenosine(37) in tRNA = N(6)-L-threonylcarbamoyladenosine(37) in tRNA + AMP + H(+). Its function is as follows. Required for the formation of a threonylcarbamoyl group on adenosine at position 37 (t(6)A37) in tRNAs that read codons beginning with adenine. Is involved in the transfer of the threonylcarbamoyl moiety of threonylcarbamoyl-AMP (TC-AMP) to the N6 group of A37, together with TsaE and TsaB. TsaD likely plays a direct catalytic role in this reaction. The sequence is that of tRNA N6-adenosine threonylcarbamoyltransferase from Phytoplasma australiense.